Consider the following 233-residue polypeptide: Small ribosomal subunit protein uS2 (233 aa).

It belongs to the universal ribosomal protein uS2 family.

The polypeptide is Small ribosomal subunit protein uS2 (Clostridium acetobutylicum (strain ATCC 824 / DSM 792 / JCM 1419 / IAM 19013 / LMG 5710 / NBRC 13948 / NRRL B-527 / VKM B-1787 / 2291 / W)).